A 661-amino-acid chain; its full sequence is UvrABC system protein B (661 aa).

The Helicase ATP-binding domain occupies 28-414; sequence DGVNEGKRHQ…HTDEMVEQII (387 aa). 41–48 serves as a coordination point for ATP; it reads GATGTGKT. Residues 94–117 carry the Beta-hairpin motif; that stretch reads YYDYYQPEAYVPSTDTFIEKDASI. Residues 432–598 form the Helicase C-terminal domain; sequence QIDDLLSEIQ…TINKKIHDVI (167 aa). The tract at residues 603 to 624 is disordered; the sequence is ESDETNQQQQTELPKKMTKKER. Residues 625 to 660 form the UVR domain; that stretch reads QKTIENIEKEMKKAAKDLDFEKATELRDMLFELKAE.

It belongs to the UvrB family. Forms a heterotetramer with UvrA during the search for lesions. Interacts with UvrC in an incision complex.

It localises to the cytoplasm. The UvrABC repair system catalyzes the recognition and processing of DNA lesions. A damage recognition complex composed of 2 UvrA and 2 UvrB subunits scans DNA for abnormalities. Upon binding of the UvrA(2)B(2) complex to a putative damaged site, the DNA wraps around one UvrB monomer. DNA wrap is dependent on ATP binding by UvrB and probably causes local melting of the DNA helix, facilitating insertion of UvrB beta-hairpin between the DNA strands. Then UvrB probes one DNA strand for the presence of a lesion. If a lesion is found the UvrA subunits dissociate and the UvrB-DNA preincision complex is formed. This complex is subsequently bound by UvrC and the second UvrB is released. If no lesion is found, the DNA wraps around the other UvrB subunit that will check the other stand for damage. This is UvrABC system protein B from Staphylococcus epidermidis (strain ATCC 35984 / DSM 28319 / BCRC 17069 / CCUG 31568 / BM 3577 / RP62A).